Reading from the N-terminus, the 398-residue chain is Lysophosphatidylserine lipase ABHD12 (398 aa).

Positions 1-16 are enriched in basic and acidic residues; the sequence is MRKRTEPVALEHERRT. Residues 1–24 are disordered; it reads MRKRTEPVALEHERRTASGSPSAG. At 1 to 74 the chain is on the cytoplasmic side; it reads MRKRTEPVAL…RKGLCFRLRK (74 aa). Residues 75-95 traverse the membrane as a helical segment; sequence ILFFVLGLYVAIPFLIKLCPG. The Extracellular portion of the chain corresponds to 96 to 398; that stretch reads IQAKLIFLNF…LGKSEPGRQH (303 aa). An N-linked (GlcNAc...) asparagine glycan is attached at N123. S246 (nucleophile) is an active-site residue. Catalysis depends on charge relay system residues D333 and H372.

The protein belongs to the serine esterase family.

The protein resides in the endoplasmic reticulum membrane. It carries out the reaction 1-(9Z-octadecenoyl)-sn-glycero-3-phospho-L-serine + H2O = sn-glycero-3-phospho-L-serine + (9Z)-octadecenoate + H(+). It catalyses the reaction 1-(9Z-octadecenoyl)-sn-glycero-3-phospho-(1'-sn-glycerol) + H2O = sn-glycero-3-phospho-(1'-sn-glycerol) + (9Z)-octadecenoate + H(+). The enzyme catalyses 1-(9Z-octadecenoyl)-sn-glycero-3-phospho-(1D-myo-inositol) + H2O = sn-glycero-3-phospho-1D-myo-inositol + (9Z)-octadecenoate + H(+). The catalysed reaction is 1-(9Z-octadecenoyl)-sn-glycero-3-phosphoethanolamine + H2O = sn-glycero-3-phosphoethanolamine + (9Z)-octadecenoate + H(+). It carries out the reaction 1-(9Z-octadecenoyl)-sn-glycero-3-phosphocholine + H2O = 1-(9Z-octadecenoyl)-sn-glycerol + phosphocholine + H(+). It catalyses the reaction 2-(9Z-octadecenoyl)-glycerol + H2O = glycerol + (9Z)-octadecenoate + H(+). The enzyme catalyses 1-hexadecanoyl-sn-glycero-3-phospho-L-serine + H2O = sn-glycero-3-phospho-L-serine + hexadecanoate + H(+). The catalysed reaction is 2-(5Z,8Z,11Z,14Z-eicosatetraenoyl)-glycerol + H2O = glycerol + (5Z,8Z,11Z,14Z)-eicosatetraenoate + H(+). It carries out the reaction Hydrolyzes glycerol monoesters of long-chain fatty acids.. It catalyses the reaction 1-decanoylglycerol + H2O = decanoate + glycerol + H(+). The enzyme catalyses 1-dodecanoylglycerol + H2O = dodecanoate + glycerol + H(+). The catalysed reaction is 1-tetradecanoylglycerol + H2O = tetradecanoate + glycerol + H(+). It carries out the reaction 2-hexadecanoylglycerol + H2O = glycerol + hexadecanoate + H(+). It catalyses the reaction 1-(9Z-octadecenoyl)-glycerol + H2O = glycerol + (9Z)-octadecenoate + H(+). The enzyme catalyses 2-(9Z,12Z-octadecadienoyl)-glycerol + H2O = (9Z,12Z)-octadecadienoate + glycerol + H(+). The catalysed reaction is 1-(5Z,8Z,11Z,14Z-eicosatetraenoyl)-glycerol + H2O = glycerol + (5Z,8Z,11Z,14Z)-eicosatetraenoate + H(+). It carries out the reaction 1-(9Z,12Z-octadecadienoyl)-glycerol + H2O = (9Z,12Z)-octadecadienoate + glycerol + H(+). It catalyses the reaction 1-hexadecanoylglycerol + H2O = glycerol + hexadecanoate + H(+). The enzyme catalyses 1-octadecanoylglycerol + H2O = octadecanoate + glycerol + H(+). The catalysed reaction is 1-octadecanoyl-2-(9,10-epoxyoctadecanoyl)-sn-glycero-3-phospho-L-serine + H2O = 9,10-epoxyoctadecanoate + 1-octadecanoyl-sn-glycero-3-phosphoserine + H(+). It carries out the reaction 1-octadecanoyl-2-(10-hydroxyoctadecanoyl)-sn-glycero-3-phospho-L-serine + H2O = 1-octadecanoyl-sn-glycero-3-phosphoserine + 10-hydroxyoctadecanoate + H(+). It catalyses the reaction 1-hexadecanoyl-2-(10-hydroxyoctadecanoyl)-sn-glycero-3-phospho-L-serine + H2O = 10-hydroxyoctadecanoate + 1-hexadecanoyl-sn-glycero-3-phospho-L-serine + H(+). In terms of biological role, lysophosphatidylserine (LPS) lipase that mediates the hydrolysis of lysophosphatidylserine, a class of signaling lipids that regulates immunological and neurological processes. Represents a major lysophosphatidylserine lipase in the brain, thereby playing a key role in the central nervous system. Also able to hydrolyze oxidized phosphatidylserine; oxidized phosphatidylserine is produced in response to severe inflammatory stress and constitutes a proapoptotic 'eat me' signal. Also has monoacylglycerol (MAG) lipase activity: hydrolyzes 2-arachidonoylglycerol (2-AG), thereby acting as a regulator of endocannabinoid signaling pathways. Has a strong preference for very-long-chain lipid substrates; substrate specificity is likely due to improved catalysis and not improved substrate binding. The chain is Lysophosphatidylserine lipase ABHD12 from Bos taurus (Bovine).